The primary structure comprises 343 residues: Glyceraldehyde-3-phosphate dehydrogenase 1 (343 aa).

Residues 13-14, D35, R79, and S121 contribute to the NAD(+) site; that span reads RI. D-glyceraldehyde 3-phosphate is bound by residues 154–156, T185, 214–215, and R237; these read SCT and TG. C155 acts as the Nucleophile in catalysis. N319 lines the NAD(+) pocket.

This sequence belongs to the glyceraldehyde-3-phosphate dehydrogenase family. In terms of assembly, homotetramer.

The protein localises to the cytoplasm. The catalysed reaction is D-glyceraldehyde 3-phosphate + phosphate + NAD(+) = (2R)-3-phospho-glyceroyl phosphate + NADH + H(+). It participates in carbohydrate degradation; glycolysis; pyruvate from D-glyceraldehyde 3-phosphate: step 1/5. Catalyzes the oxidative phosphorylation of glyceraldehyde 3-phosphate (G3P) to 1,3-bisphosphoglycerate (BPG) using the cofactor NAD. The first reaction step involves the formation of a hemiacetal intermediate between G3P and a cysteine residue, and this hemiacetal intermediate is then oxidized to a thioester, with concomitant reduction of NAD to NADH. The reduced NADH is then exchanged with the second NAD, and the thioester is attacked by a nucleophilic inorganic phosphate to produce BPG. The protein is Glyceraldehyde-3-phosphate dehydrogenase 1 (gap1) of Trichormus variabilis (strain ATCC 29413 / PCC 7937) (Anabaena variabilis).